Consider the following 284-residue polypeptide: Mediator of RNA polymerase II transcription subunit 4 (284 aa).

Position 2 is an N-acetylserine (serine 2). The interval 205 to 284 (RIPGEEVEET…DLDLFDPDDF (80 aa)) is disordered. Basic and acidic residues predominate over residues 225–238 (EEQKGQMAKKEGTP). A Phosphothreonine; by KIN28 modification is found at threonine 237. At serine 242 the chain carries Phosphoserine. The span at 248–265 (TAKEVGDEADNTKDKEKE) shows a compositional bias: basic and acidic residues. The span at 266-284 (ENNDDALDLDLDLFDPDDF) shows a compositional bias: acidic residues.

Belongs to the Mediator complex subunit 4 family. Component of the Mediator complex, which is composed of at least 21 subunits that form three structurally distinct submodules. The Mediator head module contains MED6, MED8, MED11, SRB4/MED17, SRB5/MED18, ROX3/MED19, SRB2/MED20 and SRB6/MED22, the middle module contains MED1, MED4, NUT1/MED5, MED7, CSE2/MED9, NUT2/MED10, SRB7/MED21 and SOH1/MED31, and the tail module contains MED2, PGD1/MED3, RGR1/MED14, GAL11/MED15 and SIN4/MED16. The head and the middle modules interact directly with RNA polymerase II, whereas the elongated tail module interacts with gene-specific regulatory proteins. MED4 interacts directly with MED1, MED7 and SRB7/MED21.

Its subcellular location is the nucleus. Its function is as follows. Component of the Mediator complex, a coactivator involved in the regulated transcription of nearly all RNA polymerase II-dependent genes. Mediator functions as a bridge to convey information from gene-specific regulatory proteins to the basal RNA polymerase II transcription machinery. The Mediator complex, having a compact conformation in its free form, is recruited to promoters by direct interactions with regulatory proteins and serves for the assembly of a functional preinitiation complex with RNA polymerase II and the general transcription factors. The Mediator complex unfolds to an extended conformation and partially surrounds RNA polymerase II, specifically interacting with the unphosphorylated form of the C-terminal domain (CTD) of RNA polymerase II. The Mediator complex dissociates from the RNA polymerase II holoenzyme and stays at the promoter when transcriptional elongation begins. The polypeptide is Mediator of RNA polymerase II transcription subunit 4 (MED4) (Saccharomyces cerevisiae (strain ATCC 204508 / S288c) (Baker's yeast)).